We begin with the raw amino-acid sequence, 372 residues long: Galanin receptor type 2 (372 aa).

The Extracellular segment spans residues 1-28 (MNGSGSQGAENTSQEGGSGGWQPEAVLV). Asparagine 2 and asparagine 11 each carry an N-linked (GlcNAc...) asparagine glycan. A helical membrane pass occupies residues 29–49 (PLFFALIFLVGTVGNALVLAV). At 50-60 (LLRGGQAVSTT) the chain is on the cytoplasmic side. A helical transmembrane segment spans residues 61 to 81 (NLFILNLGVADLCFILCCVPF). Topologically, residues 82–99 (QATIYTLDDWVFGSLLCK) are extracellular. Residues cysteine 98 and cysteine 175 are joined by a disulfide bond. Residues 100 to 121 (AVHFLIFLTMHASSFTLAAVSL) form a helical membrane-spanning segment. The Cytoplasmic portion of the chain corresponds to 122-141 (DRYLAIRYPLHSRELRTPRN). A helical membrane pass occupies residues 142–162 (ALAAIGLIWGLALLFSGPYLS). The Extracellular segment spans residues 163–187 (YYRQSQLANLTVCHPAWSAPRRRAM). The chain crosses the membrane as a helical span at residues 188 to 208 (DLCTFVFSYLLPVLVLSLTYA). Residues 209 to 237 (RTLRYLWRTVDPVTAGSGSQRAKRKVTRM) lie on the Cytoplasmic side of the membrane. The helical transmembrane segment at 238 to 258 (IIIVAVLFCLCWMPHHALILC) threads the bilayer. The Extracellular segment spans residues 259–260 (VW). Residues 261–281 (FGRFPLTRATYALRILSHLVS) traverse the membrane as a helical segment. Over 282–372 (YANSCVNPIV…ASSRTLDPAC (91 aa)) the chain is Cytoplasmic. Positions 353–372 (VPPPALPNCTASSRTLDPAC) are disordered. Over residues 361-372 (CTASSRTLDPAC) the composition is skewed to polar residues.

This sequence belongs to the G-protein coupled receptor 1 family.

Its subcellular location is the cell membrane. Receptor for the hormone galanin, GALP and spexin-1. The activity of this receptor is mediated by G proteins that activate the phospholipase C/protein kinase C pathway (via G(q)) and that inhibit adenylyl cyclase (via G(i)). In Rattus norvegicus (Rat), this protein is Galanin receptor type 2 (Galr2).